Consider the following 435-residue polypeptide: Zinc finger CCCH domain-containing protein 16 (435 aa).

A C3H1-type zinc finger spans residues 1 to 27 (MRKELCRNFQRGSCRYGENCRFLHPQQ). The tract at residues 2–88 (RKELCRNFQR…ASTPTGGGAA (87 aa)) is 6 X 2 AA repeats of F-G. 2 disordered regions span residues 25 to 105 (PQQA…DHKC) and 205 to 374 (TPSI…SQNN). 2 repeat units span residues 34–35 (FG) and 36–37 (FG). Residues 39-51 (QNQQQQQQQQQQN) are compositionally biased toward low complexity. A run of 2 repeats spans residues 56-57 (FG) and 58-59 (FG). Positions 63–77 (GGSSRPNQFQNTWSR) are enriched in polar residues. The segment covering 78-99 (TASTPTGGGAAASTQQTGKQTQ) has biased composition (low complexity). Composition is skewed to polar residues over residues 205-320 (TPSI…VNTP) and 328-339 (SGFQTNPSTTFK). 2 tandem repeats follow at residues 343–344 (FG) and 359–360 (FG). Residues 351–374 (TTPQNNNIFGQSTPTPATNTSQNN) show a composition bias toward polar residues.

In terms of assembly, part of the nuclear pore complex (NPC). The NPC has an eight-fold symmetrical structure comprising a central transport channel and two rings, the cytoplasmic and nuclear rings, to which eight filaments are attached. The cytoplasmic filaments have loose ends, while the nuclear filaments are joined in a distal ring, forming a nuclear basket. NPCs are highly dynamic in configuration and composition, and can be devided in 3 subcomplexes, the NUP62 subcomplex, the NUP107-160 subcomplex and the NUP93 subcomplex, containing approximately 30 different nucleoporin proteins.

It localises to the nucleus envelope. The protein resides in the nucleus. The protein localises to the nuclear pore complex. The sequence is that of Zinc finger CCCH domain-containing protein 16 from Arabidopsis thaliana (Mouse-ear cress).